Consider the following 1167-residue polypeptide: Kinesin-like protein KIN-14M (1167 aa).

Residues 93-130 (PRKENDPGTQNSEGRRKIPKNPAMSEPSSPLSQTTLSS) are disordered. A compositionally biased stretch (low complexity) spans 117–130 (SEPSSPLSQTTLSS). Coiled-coil stretches lie at residues 271–333 (VHQM…KEEM), 366–398 (AKYR…AMKS), and 432–489 (KQEL…ESRS). A Kinesin motor domain is found at 572 to 900 (NIRVHCRIRP…LKFADRVSGV (329 aa)). 656–663 (GQTGSGKT) contacts ATP. Positions 907-944 (ANKEGKDIKEFKEQLSLLKDKIAKKDEEISRLQLQSHN) form a coiled coil. Disordered stretches follow at residues 955–974 (SLLK…SKIQ) and 1083–1167 (PDQD…KRWT). The span at 958–972 (KHSSSSPGISSLGSK) shows a compositional bias: low complexity. Polar residues-rich tracts occupy residues 1113–1124 (ASRTTTPKTPQS) and 1151–1167 (TQAT…KRWT).

It belongs to the TRAFAC class myosin-kinesin ATPase superfamily. Kinesin family. KIN-14 subfamily.

This chain is Kinesin-like protein KIN-14M, found in Oryza sativa subsp. japonica (Rice).